The sequence spans 380 residues: Homoserine O-succinyltransferase (380 aa).

In terms of domain architecture, AB hydrolase-1 spans N49–L357. S155 serves as the catalytic Nucleophile. A substrate-binding site is contributed by R225. Catalysis depends on residues D320 and H353. Position 354 (D354) interacts with substrate.

Belongs to the AB hydrolase superfamily. MetX family. As to quaternary structure, homodimer.

It is found in the cytoplasm. It catalyses the reaction L-homoserine + succinyl-CoA = O-succinyl-L-homoserine + CoA. It functions in the pathway amino-acid biosynthesis; L-methionine biosynthesis via de novo pathway; O-succinyl-L-homoserine from L-homoserine: step 1/1. Transfers a succinyl group from succinyl-CoA to L-homoserine, forming succinyl-L-homoserine. The chain is Homoserine O-succinyltransferase from Laribacter hongkongensis (strain HLHK9).